Here is a 601-residue protein sequence, read N- to C-terminus: Glutamyl-tRNA(Gln) amidotransferase subunit B, mitochondrial (601 aa).

Residues 1 to 52 (MLQQWLRQSPRAARVLRGSCCRGPQSGSLRHSPLPTAPHRCIRSLQTSATES) constitute a mitochondrion transit peptide.

This sequence belongs to the GatB/GatE family. GatB subfamily. Subunit of the heterotrimeric GatCAB amidotransferase (AdT) complex, composed of A, B and C subunits.

The protein localises to the mitochondrion. The enzyme catalyses L-glutamyl-tRNA(Gln) + L-glutamine + ATP + H2O = L-glutaminyl-tRNA(Gln) + L-glutamate + ADP + phosphate + H(+). Allows the formation of correctly charged Gln-tRNA(Gln) through the transamidation of misacylated Glu-tRNA(Gln) in the mitochondria. The reaction takes place in the presence of glutamine and ATP through an activated gamma-phospho-Glu-tRNA(Gln). In Aspergillus fumigatus (strain ATCC MYA-4609 / CBS 101355 / FGSC A1100 / Af293) (Neosartorya fumigata), this protein is Glutamyl-tRNA(Gln) amidotransferase subunit B, mitochondrial.